We begin with the raw amino-acid sequence, 266 residues long: Dickkopf-related protein 1 (266 aa).

Residues Met-1–Ala-31 form the signal peptide. Ser-61 carries an O-linked (GalNAc...) serine glycan. Intrachain disulfides connect Cys-85-Cys-97, Cys-91-Cys-111, Cys-114-Cys-128, Cys-121-Cys-133, Cys-127-Cys-138, Cys-189-Cys-201, Cys-195-Cys-210, Cys-200-Cys-237, Cys-220-Cys-245, and Cys-239-Cys-263. The interval Cys-85–Cys-138 is DKK-type Cys-1. The DKK-type Cys-2 stretch occupies residues Cys-189–Cys-263. Asn-256 carries an N-linked (GlcNAc...) asparagine glycan.

Belongs to the dickkopf family. In terms of assembly, interacts with LRP6. Interacts (via the C-terminal Cys-rich domain) with LRP5 (via beta-propeller regions 3 and 4); the interaction, enhanced by MESD and or KREMEN, antagonizes Wnt-mediated signaling. Forms a ternary complex with LRP6 and KREM1. Interacts with KREM1. As to expression, placenta.

It is found in the secreted. Functionally, antagonizes canonical Wnt signaling by inhibiting LRP5/6 interaction with Wnt and by forming a ternary complex with the transmembrane protein KREMEN that promotes internalization of LRP5/6. DKKs play an important role in vertebrate development, where they locally inhibit Wnt regulated processes such as antero-posterior axial patterning, limb development, somitogenesis and eye formation. In the adult, Dkks are implicated in bone formation and bone disease, cancer and Alzheimer disease. Inhibits the pro-apoptotic function of KREMEN1 in a Wnt-independent manner, and has anti-apoptotic activity. The protein is Dickkopf-related protein 1 (DKK1) of Homo sapiens (Human).